A 529-amino-acid chain; its full sequence is MSVKWTSVILLIQLSFCFSSGNCGKVLVWAAEYSHWMNIKTILDELIQRGHEVTVLASSASILFDPNNSSALKIEIYPTSLTKTELENFIMQQIKRWSDLPKDTFWLYFSQVQEIMSIFGDITRKFCKDVVSNKKFMKKVQESRFDVIFADAIFPCSELLAELFNIPFVYSLSFSPGYTFEKHSGGFIFPPSYVPVVMSELTDQMTFMERVKNMIYVLYFDFWFEIFDMKKWDQFYSEVLGRPTTLSETMGKADVWLIRNSWNFQFPYPLLPNVDFVGGLHCKPAKPLPKEMEDFVQSSGENGVVVFSLGSMVSNMTEERANVIASALAQIPQKVLWRFDGNKPDTLGLNTRLYKWIPQNDLLGHPKTRAFITHGGANGIYEAIYHGIPMVGIPLFADQPDNIAHMKARGAAVRVDFNTMSSTDLLNALKRVINDPSYKENVMKLSRIQHDQPVKPLDRAVFWIEFVMRHKGAKHLRVAAHDLTWFQYHSLDVIGFLLVCVATVIFIVTKCCLFCFWKFARKAKKGKND.

The N-terminal stretch at Met-1–Cys-23 is a signal peptide. 3 N-linked (GlcNAc...) asparagine glycosylation sites follow: Asn-67, Asn-68, and Asn-315. Residues Thr-373–Gly-379 and Asp-398 contribute to the UDP-alpha-D-glucuronate site. A helical transmembrane segment spans residues Val-493–Thr-509.

This sequence belongs to the UDP-glycosyltransferase family.

The protein localises to the endoplasmic reticulum membrane. The catalysed reaction is glucuronate acceptor + UDP-alpha-D-glucuronate = acceptor beta-D-glucuronoside + UDP + H(+). It carries out the reaction 17alpha-estradiol + UDP-alpha-D-glucuronate = 17alpha-estradiol 17-O-(beta-D-glucuronate) + UDP + H(+). It catalyses the reaction 17beta-estradiol + UDP-alpha-D-glucuronate = 17beta-estradiol 17-O-(beta-D-glucuronate) + UDP + H(+). The enzyme catalyses 2-hydroxy-17beta-estradiol + UDP-alpha-D-glucuronate = 2-hydroxy-17beta-estradiol 3-O-(beta-D-glucuronate) + UDP + H(+). The catalysed reaction is 4-hydroxy-17beta-estradiol + UDP-alpha-D-glucuronate = 17beta-estradiol 4-O-(beta-D-glucuronate) + UDP + H(+). It carries out the reaction 4-hydroxyestrone + UDP-alpha-D-glucuronate = estrone 4-O-(beta-D-glucuronate) + UDP + H(+). It catalyses the reaction 16alpha-hydroxyestrone + UDP-alpha-D-glucuronate = 16alpha-hydroxyestrone 16-O-(beta-D-glucuronate) + UDP + H(+). The enzyme catalyses 16alpha,17beta-estriol + UDP-alpha-D-glucuronate = 16alpha,17beta-estriol 16-O-(beta-D-glucuronate) + UDP + H(+). The catalysed reaction is 16beta,17beta-estriol + UDP-alpha-D-glucuronate = 16beta,17beta-estriol 16-O-(beta-D-glucuronate) + UDP + H(+). It carries out the reaction 16alpha,17alpha-estriol + UDP-alpha-D-glucuronate = 16alpha,17alpha-estriol 16-O-(beta-D-glucuronate) + UDP + H(+). It catalyses the reaction 16alpha,17alpha-estriol + UDP-alpha-D-glucuronate = 16alpha,17alpha-estriol 17-O-(beta-D-glucuronate) + UDP + H(+). The enzyme catalyses epitestosterone + UDP-alpha-D-glucuronate = epitestosterone 17-O-(beta-D-glucuronate) + UDP + H(+). The catalysed reaction is hyodeoxycholate + UDP-alpha-D-glucuronate = hyodeoxycholate 6-O-(beta-D-glucuronate) + UDP + H(+). It carries out the reaction hyocholate + UDP-alpha-D-glucuronate = hyocholate 6-O-(beta-D-glucuronate) + UDP + H(+). It catalyses the reaction all-trans-retinoate + UDP-alpha-D-glucuronate = all-trans-retinoyl-1-O-(beta-D-glucuronate) + UDP. The enzyme catalyses all-trans-4-hydroxyretinoate + UDP-alpha-D-glucuronate = all-trans-4-hydroxy-4-O-(beta-D-glucuronide)-retinoate + UDP + H(+). The catalysed reaction is (E)-ferulate + UDP-alpha-D-glucuronate = (E)-ferulic acid beta-D-glucuronate ester + UDP. It carries out the reaction 8-iso-prostaglandin F2alpha + UDP-alpha-D-glucuronate = 8-iso-prostaglandin F2alpha-glucuronide + UDP + H(+). It catalyses the reaction 5-epi-5-F2t-IsoP + UDP-alpha-D-glucuronate = 5-epi-5-F2t-IsoP-glucuronide + UDP + H(+). The enzyme catalyses (5Z,8Z,11Z,14Z)-eicosatetraenoate + UDP-alpha-D-glucuronate = O-[(5Z),(8Z),(11Z),(14Z)-eicosatetraenoyl]-beta-D-glucuronate + UDP. The catalysed reaction is 15-hydroxy-(5Z,8Z,11Z,13E)-eicosatetraenoate + UDP-alpha-D-glucuronate = 15-O-(beta-D-glucuronosyl)-(5Z,8Z,11Z,14Z)-eicosatetraenoate + UDP + H(+). It carries out the reaction 20-hydroxy-(5Z,8Z,11Z,14Z)-eicosatetraenoate + UDP-alpha-D-glucuronate = 20-O-(beta-D-glucuronosyl)-(5Z,8Z,11Z,14Z)-eicosatetraenoate + UDP + H(+). It catalyses the reaction (E)-ferulate + UDP-alpha-D-glucuronate = (E)-4-O-(beta-D-glucuronosyl)-ferulate + UDP + H(+). The enzyme catalyses prostaglandin B1 + UDP-alpha-D-glucuronate = 15-O-(beta-D-glucuronosyl)-prostaglandin B1 + UDP + H(+). The catalysed reaction is mycophenolate + UDP-alpha-D-glucuronate = mycophenolic acid O-acyl-beta-D-glucuronide + UDP. It carries out the reaction losartan + UDP-alpha-D-glucuronate = losartan-2-N-beta-D-glucuronide + UDP. It catalyses the reaction candesartan + UDP-alpha-D-glucuronate = candesartan O-beta-D-glucuronoside + UDP. The enzyme catalyses candesartan + UDP-alpha-D-glucuronate = candesartan-2-N-beta-D-glucuronide + UDP. The catalysed reaction is zolasartan + UDP-alpha-D-glucuronate = zolarsartan O-beta-D-glucuronoside + UDP. Functionally, UDP-glucuronosyltransferase (UGT) that catalyzes phase II biotransformation reactions in which lipophilic substrates are conjugated with glucuronic acid to increase the metabolite's water solubility, thereby facilitating excretion into either the urine or bile. Essential for the elimination and detoxification of drugs, xenobiotics and endogenous compounds. Catalyzes the glucuronidation of endogenous steroid hormones such as androgens (epitestosterone, androsterone) and estrogens (estradiol, epiestradiol, estriol, catechol estrogens). Also regulates the levels of retinoic acid, a major metabolite of vitamin A involved in apoptosis, cellular growth and differentiation, and embryonic development. Contributes to bile acid (BA) detoxification by catalyzing the glucuronidation of BA substrates, which are natural detergents for dietary lipids absorption. Involved in the glucuronidation of arachidonic acid (AA) and AA-derived eicosanoids including 15-HETE, 20-HETE, PGE2, PGB1 and F2-isoprostanes (8-iso-PGF2alpha and 5-epi-5-F2t-IsoP). Involved in the glucuronidation of the phytochemical ferulic acid at the phenolic or the carboxylic acid group. Involved in the glucuronidation of the AGTR1 angiotensin receptor antagonist losartan, caderastan and zolarsatan, drugs which can inhibit the effect of angiotensin II. Also metabolizes mycophenolate, an immunosuppressive agent. The polypeptide is UDP-glucuronosyltransferase 2B7 (Homo sapiens (Human)).